A 318-amino-acid polypeptide reads, in one-letter code: Basic leucine zipper (bZIP) transcription factor atfB (318 aa).

2 disordered regions span residues 79–100 (LKNTHVRNGQPTPPPFDDKKLQ) and 114–164 (FNSS…EKRE). Positions 160–199 (REKREKFLERNRLAASKCRQKKKEHTKLLETRFREVSSKK) are basic motif. Residues 160-223 (REKREKFLER…LNLKNEMLRH (64 aa)) form the bZIP domain. A leucine-zipper region spans residues 202 to 216 (LESEIEHLRSEVLNL). Residues 247-304 (TPNRDLVSPMRSPEQMTASTPHGLSFGFDGPMQLPSEMGSPLDQRRDSEQSIMTESSY) form a disordered region.

Belongs to the bZIP family. ATF subfamily.

The protein localises to the nucleus. Its function is as follows. Transcription factor that acts as a key player in the regulatory circuit that integrates secondary metabolism and cellular response to oxidative stress. Regulates the genes involved in development, stress response, and secondary metabolism through direct binding to their promoters. Particularly involved in the resistance to oxidative stress in asexual conidiospores. Binds aflatoxin gene promoters carrying the cAMP-response element (CRE1) under aflatoxin-inducing conditions. The polypeptide is Basic leucine zipper (bZIP) transcription factor atfB (Aspergillus parasiticus (strain ATCC 56775 / NRRL 5862 / SRRC 143 / SU-1)).